The sequence spans 936 residues: Intimin (936 aa).

The first 41 residues, 1-41 (MIIHGFCTGTRHKHKLRKTFIMLGAGLGLFFSVNQNSFANG), serve as a signal peptide directing secretion. The 50-residue stretch at 63–112 (LFYTLKTGESVAQLSKSQGISVPVIWSLNKHLYSSESEMMKASPGQQIIL) folds into the LysM domain. Big-1 domains follow at residues 557–650 (ITNF…VIFV) and 657–748 (ITEI…VEFF). The region spanning 780–831 (KLQATGGNGKYTWKSSNTKIASVDNSGVITLNEKGSATITVVSGDNQSATYT) is the BIG2 domain. The cysteines at positions 857 and 934 are disulfide-linked.

This sequence belongs to the intimin/invasin family.

It is found in the cell outer membrane. In terms of biological role, an inverse autotransporter. In Citrobacter freundii, this protein is Intimin (eae).